A 142-amino-acid chain; its full sequence is Malate dehydrogenase, mitochondrial (142 aa).

NAD(+) is bound by residues 1–6 (ASGGIG) and Asp26. Residues Arg73 and Arg79 each coordinate substrate. NAD(+)-binding positions include Asn86 and 109–111 (ITN). Asn111 serves as a coordination point for substrate.

It belongs to the LDH/MDH superfamily. MDH type 1 family. As to quaternary structure, homodimer.

The protein localises to the mitochondrion matrix. It carries out the reaction (S)-malate + NAD(+) = oxaloacetate + NADH + H(+). In Schistosoma mansoni (Blood fluke), this protein is Malate dehydrogenase, mitochondrial.